The following is a 1288-amino-acid chain: Mitogen-activated protein kinase kinase kinase 6 (1288 aa).

Positions 648–906 constitute a Protein kinase domain; it reads TGERLVLGKG…AQTLLGDPFL (259 aa). ATP is bound by residues 654 to 662 and Lys-677; that span reads LGKGTYGVV. Asp-771 functions as the Proton acceptor in the catalytic mechanism. Thr-806 bears the Phosphothreonine mark. Residues 899–997 are disordered; sequence TLLGDPFLQP…SSGLSLLHQE (99 aa). The segment covering 914 to 952 has biased composition (low complexity); the sequence is SPSSPRHAPRPSDAPSASPTPSANSTTQSQTFPCPQAPS. Phosphoserine is present on residues Ser-964 and Ser-984. Residues 980–989 show a composition bias toward low complexity; sequence EEPASPEESS. Residues 1004-1029 are a coiled coil; sequence LAAVLEQELPALAENLHQEQKQEQGA. Over residues 1123–1134 the composition is skewed to basic and acidic residues; the sequence is VEKEAVSPRSEE. The segment at 1123–1157 is disordered; that stretch reads VEKEAVSPRSEELSNEGDSQQSPGQQSPLPVEPEQ. Phosphoserine is present on residues Ser-1129 and Ser-1149. Residues 1141–1151 are compositionally biased toward low complexity; that stretch reads SQQSPGQQSPL. Residues 1166–1205 adopt a coiled-coil conformation; it reads LSLLRAETDRLREILAGKEREYQALVQRALQRLNEEARTY.

This sequence belongs to the protein kinase superfamily. STE Ser/Thr protein kinase family. MAP kinase kinase kinase subfamily. In terms of assembly, binds both upstream activators and downstream substrates in multimolecular complexes. The cofactor is Mg(2+).

The enzyme catalyses L-seryl-[protein] + ATP = O-phospho-L-seryl-[protein] + ADP + H(+). It catalyses the reaction L-threonyl-[protein] + ATP = O-phospho-L-threonyl-[protein] + ADP + H(+). Its activity is regulated as follows. Activated by phosphorylation on Thr-806. Catalytically active only when complexed with MAP3K5, with MAP3K5 supporting the stability and the active configuration of MAP3K6 and MAP3K6 activating MAP3K5 by direct phosphorylation. In terms of biological role, component of a protein kinase signal transduction cascade. Activates the JNK, but not ERK or p38 kinase pathways. The protein is Mitogen-activated protein kinase kinase kinase 6 (MAP3K6) of Homo sapiens (Human).